Consider the following 321-residue polypeptide: G-protein coupled receptor homolog ECRF3 (321 aa).

Over 1–34 the chain is Extracellular; that stretch reads MEVKLDFSSEDFSNYSYNYSGDIYYGDVAPCVVN. N-linked (GlcNAc...) asparagine; by host glycans are attached at residues Asn14 and Asn18. A helical transmembrane segment spans residues 35 to 51; that stretch reads FLISESALAFIYVLMFL. Over 52–76 the chain is Cytoplasmic; it reads CNAIGNSLVLRTFLKYRAQAQSFDY. A helical membrane pass occupies residues 77 to 93; sequence LMMGFCLNSLFLAGYLL. Topologically, residues 94–124 are extracellular; that stretch reads MRLLRMFEIFMNTELCKLEAFFLNLSIYWSP. Asn117 carries an N-linked (GlcNAc...) asparagine; by host glycan. Residues 125–141 form a helical membrane-spanning segment; that stretch reads FILVFISVLRCLLIFCA. Topologically, residues 142 to 149 are cytoplasmic; that stretch reads TRLWVKKT. A helical transmembrane segment spans residues 150-166; sequence LIGQVFLCCSFVLACFG. At 167–196 the chain is on the extracellular side; the sequence is ALPHVMVTSYYEPSSCIEEDGVLTEQLRTK. A helical transmembrane segment spans residues 197-215; the sequence is LNTFHTWYSFAGPLFITVI. At 216-234 the chain is on the cytoplasmic side; that stretch reads CYSMSCYKLFKTKLSKRAE. Residues 235 to 251 traverse the membrane as a helical segment; the sequence is VVTIITMTTLLFIVFCI. Residues 252–286 are Extracellular-facing; it reads PYYIMESIDTLLRVGVIEETCAKRSAIVYGIQCTY. Residues 287–303 form a helical membrane-spanning segment; the sequence is MLLVLYYCMLPLMFAMF. The Cytoplasmic segment spans residues 304–321; the sequence is GSLFRQRMAAWCKTICHC.

The protein belongs to the G-protein coupled receptor 1 family.

It is found in the host cell membrane. May be highly relevant to the process of cellular transformation and rapid T-cell proliferation effected by HVS during latent infections of T-cells in susceptible hosts. This chain is G-protein coupled receptor homolog ECRF3 (74), found in Saimiri sciureus (Common squirrel monkey).